The primary structure comprises 208 residues: N-(5'-phosphoribosyl)anthranilate isomerase (208 aa).

Belongs to the TrpF family.

The catalysed reaction is N-(5-phospho-beta-D-ribosyl)anthranilate = 1-(2-carboxyphenylamino)-1-deoxy-D-ribulose 5-phosphate. Its pathway is amino-acid biosynthesis; L-tryptophan biosynthesis; L-tryptophan from chorismate: step 3/5. The sequence is that of N-(5'-phosphoribosyl)anthranilate isomerase from Methanococcus maripaludis (strain C5 / ATCC BAA-1333).